Consider the following 202-residue polypeptide: Proteasome subunit beta 1 (202 aa).

Residues 1 to 8 (MGEVVLPG) constitute a propeptide, removed in mature form; by autocatalysis. T9 serves as the catalytic Nucleophile.

The protein belongs to the peptidase T1B family. As to quaternary structure, the 20S proteasome core is composed of 14 alpha and 14 beta subunits that assemble into four stacked heptameric rings, resulting in a barrel-shaped structure. The two inner rings, each composed of seven catalytic beta subunits, are sandwiched by two outer rings, each composed of seven alpha subunits. The catalytic chamber with the active sites is on the inside of the barrel. Has a gated structure, the ends of the cylinder being occluded by the N-termini of the alpha-subunits. Is capped at one or both ends by the proteasome regulatory ATPase, PAN.

It localises to the cytoplasm. The catalysed reaction is Cleavage of peptide bonds with very broad specificity.. Its activity is regulated as follows. The formation of the proteasomal ATPase PAN-20S proteasome complex, via the docking of the C-termini of PAN into the intersubunit pockets in the alpha-rings, triggers opening of the gate for substrate entry. Interconversion between the open-gate and close-gate conformations leads to a dynamic regulation of the 20S proteasome proteolysis activity. Component of the proteasome core, a large protease complex with broad specificity involved in protein degradation. The polypeptide is Proteasome subunit beta 1 (Desulfurococcus amylolyticus (strain DSM 18924 / JCM 16383 / VKM B-2413 / 1221n) (Desulfurococcus kamchatkensis)).